Here is a 284-residue protein sequence, read N- to C-terminus: 4-diphosphocytidyl-2-C-methyl-D-erythritol kinase (284 aa).

The active site involves Lys-14. Residue 98–108 (PMGGGLGGGSS) participates in ATP binding. Asp-140 is a catalytic residue.

The protein belongs to the GHMP kinase family. IspE subfamily.

It carries out the reaction 4-CDP-2-C-methyl-D-erythritol + ATP = 4-CDP-2-C-methyl-D-erythritol 2-phosphate + ADP + H(+). It participates in isoprenoid biosynthesis; isopentenyl diphosphate biosynthesis via DXP pathway; isopentenyl diphosphate from 1-deoxy-D-xylulose 5-phosphate: step 3/6. In terms of biological role, catalyzes the phosphorylation of the position 2 hydroxy group of 4-diphosphocytidyl-2C-methyl-D-erythritol. This is 4-diphosphocytidyl-2-C-methyl-D-erythritol kinase from Shewanella baltica (strain OS223).